The following is an 83-amino-acid chain: Beta/kappa-theraphotoxin-Cg2a (83 aa).

The N-terminal stretch at M1–A21 is a signal peptide. The propeptide occupies E22–R53. Disulfide bonds link C55/C69, C62/C74, and C68/C78. I82 is subject to Isoleucine amide.

Belongs to the neurotoxin 30 (phrixotoxin) family. As to expression, expressed by the venom gland.

The protein resides in the secreted. Its function is as follows. This gating-modifier toxin shows an important inhibitory activity on sodium channels. It is very active on Nav1.7/SCN9A (IC(50)~0.6 nM), and also shows activity on Nav1.3/SCN3A (IC(50)=292 nM), Nav1.4/SCN4A (IC(50)=2.2-159 nM), and Nav1.5/SCN5A (IC(50)=2.3-2.9 uM). It has also been shown to inhibit tetrodotoxin (TTX)-resistant (IC(50)=27.6 nM) and TTX-sensitive (IC(50)=30.2 nM) sodium channels in rat dorsal root ganglion neurons. Lower inhibitory activity has also been shown on potassium channels: Kv4.2/KCND2 (IC(50)=604.2 nM), Kv4.3/KCND3 (IC(50)=425.1 nM), and Kv2.1/KCNB1 (IC(50)=14.3 uM). It binds to phospholipid membranes. Like its analog AM-8145, it may act by interacting only with the second voltage-sensor domain of Nav1.7/SCN9A. The polypeptide is Beta/kappa-theraphotoxin-Cg2a (Chilobrachys guangxiensis (Chinese earth tiger tarantula)).